Reading from the N-terminus, the 370-residue chain is tRNA-specific 2-thiouridylase MnmA (370 aa).

ATP is bound by residues 24–31 and Leu50; that span reads AMSGGVDS. Cys118 acts as the Nucleophile in catalysis. Cys118 and Cys214 are joined by a disulfide. Gly142 is an ATP binding site. Residues 164–166 are interaction with tRNA; the sequence is KDQ. Cys214 serves as the catalytic Cysteine persulfide intermediate.

The protein belongs to the MnmA/TRMU family.

The protein localises to the cytoplasm. The enzyme catalyses S-sulfanyl-L-cysteinyl-[protein] + uridine(34) in tRNA + AH2 + ATP = 2-thiouridine(34) in tRNA + L-cysteinyl-[protein] + A + AMP + diphosphate + H(+). Catalyzes the 2-thiolation of uridine at the wobble position (U34) of tRNA, leading to the formation of s(2)U34. The polypeptide is tRNA-specific 2-thiouridylase MnmA (Ehrlichia ruminantium (strain Welgevonden)).